The chain runs to 403 residues: Acetate kinase (403 aa).

Residue Asn-9 participates in Mg(2+) binding. Lys-16 serves as a coordination point for ATP. Arg-93 is a binding site for substrate. The Proton donor/acceptor role is filled by Asp-150. ATP contacts are provided by residues 210-214, 284-286, and 332-336; these read HLGNG, DFR, and GVGEN. Residue Glu-388 participates in Mg(2+) binding.

This sequence belongs to the acetokinase family. As to quaternary structure, homodimer. Mg(2+) is required as a cofactor. Requires Mn(2+) as cofactor.

The protein resides in the cytoplasm. It carries out the reaction acetate + ATP = acetyl phosphate + ADP. It participates in metabolic intermediate biosynthesis; acetyl-CoA biosynthesis; acetyl-CoA from acetate: step 1/2. In terms of biological role, catalyzes the formation of acetyl phosphate from acetate and ATP. Can also catalyze the reverse reaction. In Corynebacterium jeikeium (strain K411), this protein is Acetate kinase.